The chain runs to 652 residues: uncharacterized protein (652 aa).

Basic and acidic residues-rich tracts occupy residues 1–13 and 641–652; these read MSVT…TERK and ATERTDNLADAA. 2 disordered regions span residues 1 to 21 and 628 to 652; these read MSVT…PAKT and VPGW…ADAA.

It belongs to the ParB family.

This is an uncharacterized protein from Escherichia coli O157:H7.